Consider the following 273-residue polypeptide: MGKGGGCVPSKKKKPATTGDGPGIDDDNDATNAPIQIDDDQTTIDGDRTTATNTGGTTTPAITTTAAKISSPLKIFVVFYSMYGHVESLAKRMKKGVDSVEGVEATLYRVPETLSQEVVEQMKAPVKDLEIPEITAAELTAADGFLFGFPTRYGCMAAQMKAFFDSTGSLWKEQSLAGKPAGFFVSTGTQGGGQETTAWTAITQLVHHGMLFVPIGYTFGAGMFKMDSIRGGSPYGAGVFAGDGSREATETELALAEHQGNYMAAIVKRLAQP.

Residues 1 to 60 (MGKGGGCVPSKKKKPATTGDGPGIDDDNDATNAPIQIDDDQTTIDGDRTTATNTGGTTTP) are disordered. The segment covering 49 to 60 (TTATNTGGTTTP) has biased composition (low complexity). Residues 75 to 263 (IFVVFYSMYG…ALAEHQGNYM (189 aa)) form the Flavodoxin-like domain. FMN contacts are provided by residues 81-85 (SMYGH), 183-236 (FFVS…SPYG), and histidine 207. Position 83 (tyrosine 83) interacts with NAD(+).

The protein belongs to the WrbA family. It depends on FMN as a cofactor.

The protein resides in the cell membrane. The enzyme catalyses a quinone + NADH + H(+) = a quinol + NAD(+). It carries out the reaction a quinone + NADPH + H(+) = a quinol + NADP(+). Catalyzes the transfer of electrons from NADH and NADPH to reduce quinone to the hydroquinone state. The sequence is that of Probable NAD(P)H dehydrogenase (quinone) FQR1-like 2 from Arabidopsis thaliana (Mouse-ear cress).